The sequence spans 306 residues: NAD-dependent protein deacylase (306 aa).

Residues 1–305 (MNKQLKEFQE…PIALKPLIGD (305 aa)) enclose the Deacetylase sirtuin-type domain. 23-42 (GAGLSASSGLPTFRGSQGLW) serves as a coordination point for NAD(+). Positions 67 and 70 each coordinate substrate. 103-106 (QNVD) is an NAD(+) binding site. His-123 acts as the Proton acceptor in catalysis. The Zn(2+) site is built by Cys-131, Cys-136, Cys-200, and Cys-203. NAD(+) contacts are provided by residues 243 to 245 (GTS), 269 to 271 (NTD), and Ala-291.

It belongs to the sirtuin family. Class III subfamily. It depends on Zn(2+) as a cofactor.

It localises to the mitochondrion. The enzyme catalyses N(6)-malonyl-L-lysyl-[protein] + NAD(+) + H2O = 2''-O-malonyl-ADP-D-ribose + nicotinamide + L-lysyl-[protein]. It carries out the reaction N(6)-succinyl-L-lysyl-[protein] + NAD(+) + H2O = 2''-O-succinyl-ADP-D-ribose + nicotinamide + L-lysyl-[protein]. It catalyses the reaction N(6)-glutaryl-L-lysyl-[protein] + NAD(+) + H2O = 2''-O-glutaryl-ADP-D-ribose + nicotinamide + L-lysyl-[protein]. Functionally, NAD-dependent lysine demalonylase, desuccinylase and deglutarylase that specifically removes malonyl, succinyl and glutaryl groups on target proteins. Has weak NAD-dependent protein deacetylase activity; however this activity may not be physiologically relevant in vivo. The polypeptide is NAD-dependent protein deacylase (Candida albicans (strain SC5314 / ATCC MYA-2876) (Yeast)).